The primary structure comprises 116 residues: Large ribosomal subunit protein bL19 (116 aa).

It belongs to the bacterial ribosomal protein bL19 family.

This protein is located at the 30S-50S ribosomal subunit interface and may play a role in the structure and function of the aminoacyl-tRNA binding site. The polypeptide is Large ribosomal subunit protein bL19 (Mycoplasmopsis agalactiae (strain NCTC 10123 / CIP 59.7 / PG2) (Mycoplasma agalactiae)).